The following is a 440-amino-acid chain: Xylose isomerase (440 aa).

Mg(2+) is bound by residues aspartate 307 and aspartate 309.

It belongs to the xylose isomerase family. In terms of assembly, homotetramer. It depends on Mg(2+) as a cofactor.

Its subcellular location is the cytoplasm. It catalyses the reaction alpha-D-xylose = alpha-D-xylulofuranose. This chain is Xylose isomerase, found in Escherichia coli (strain K12 / MC4100 / BW2952).